We begin with the raw amino-acid sequence, 777 residues long: NAD(P)H-quinone oxidoreductase subunit 5, chloroplastic (777 aa).

16 helical membrane passes run 9–29 (WIIP…LLLF), 40–60 (WSFP…YLSI), 89–109 (IDPL…LVLF), 125–145 (FAYL…SNLI), 147–167 (IYIF…FWFT), 185–205 (GDFG…SFEF), 220–240 (NQVH…GAVA), 259–279 (TPIS…FLVA), 290–312 (YIMN…LALA), 328–348 (LGYM…FHLI), 355–375 (ALLF…VGYS), 397–417 (TAFL…CFWS), 426–446 (WLYS…TAFY), 550–570 (LFSL…GIPF), 604–624 (FVTN…IATF), and 731–751 (IFIF…FFVL).

The protein belongs to the complex I subunit 5 family. NDH is composed of at least 16 different subunits, 5 of which are encoded in the nucleus.

The protein localises to the plastid. It is found in the chloroplast thylakoid membrane. It carries out the reaction a plastoquinone + NADH + (n+1) H(+)(in) = a plastoquinol + NAD(+) + n H(+)(out). It catalyses the reaction a plastoquinone + NADPH + (n+1) H(+)(in) = a plastoquinol + NADP(+) + n H(+)(out). NDH shuttles electrons from NAD(P)H:plastoquinone, via FMN and iron-sulfur (Fe-S) centers, to quinones in the photosynthetic chain and possibly in a chloroplast respiratory chain. The immediate electron acceptor for the enzyme in this species is believed to be plastoquinone. Couples the redox reaction to proton translocation, and thus conserves the redox energy in a proton gradient. The sequence is that of NAD(P)H-quinone oxidoreductase subunit 5, chloroplastic (ndhF) from Oenothera elata subsp. hookeri (Hooker's evening primrose).